Consider the following 251-residue polypeptide: Imidazole glycerol phosphate synthase subunit HisF (251 aa).

Residues D11 and D130 contribute to the active site.

This sequence belongs to the HisA/HisF family. As to quaternary structure, heterodimer of HisH and HisF.

It is found in the cytoplasm. The enzyme catalyses 5-[(5-phospho-1-deoxy-D-ribulos-1-ylimino)methylamino]-1-(5-phospho-beta-D-ribosyl)imidazole-4-carboxamide + L-glutamine = D-erythro-1-(imidazol-4-yl)glycerol 3-phosphate + 5-amino-1-(5-phospho-beta-D-ribosyl)imidazole-4-carboxamide + L-glutamate + H(+). It functions in the pathway amino-acid biosynthesis; L-histidine biosynthesis; L-histidine from 5-phospho-alpha-D-ribose 1-diphosphate: step 5/9. In terms of biological role, IGPS catalyzes the conversion of PRFAR and glutamine to IGP, AICAR and glutamate. The HisF subunit catalyzes the cyclization activity that produces IGP and AICAR from PRFAR using the ammonia provided by the HisH subunit. The polypeptide is Imidazole glycerol phosphate synthase subunit HisF (Chlorobaculum tepidum (strain ATCC 49652 / DSM 12025 / NBRC 103806 / TLS) (Chlorobium tepidum)).